The sequence spans 109 residues: uncharacterized protein (109 aa).

The first 23 residues, M1–S23, serve as a signal peptide directing secretion. The N-linked (GlcNAc...) asparagine glycan is linked to N27. Residues Y45–N109 are disordered. Positions P54–Q72 are enriched in low complexity. The segment covering K94 to Q103 has biased composition (basic and acidic residues).

It is found in the secreted. This is an uncharacterized protein from Dictyostelium discoideum (Social amoeba).